The chain runs to 476 residues: Cysteine--tRNA ligase (476 aa).

Cys-29 lines the Zn(2+) pocket. The 'HIGH' region motif lies at 31–41; it reads PTVYDYPHLGH. The Zn(2+) site is built by Cys-209, His-234, and Glu-238. The 'KMSKS' region motif lies at 266–270; sequence KMSKS. Residue Lys-269 coordinates ATP.

Belongs to the class-I aminoacyl-tRNA synthetase family. It depends on Zn(2+) as a cofactor.

The protein resides in the cytoplasm. The enzyme catalyses tRNA(Cys) + L-cysteine + ATP = L-cysteinyl-tRNA(Cys) + AMP + diphosphate. The protein is Cysteine--tRNA ligase (cysS) of Pyrococcus horikoshii (strain ATCC 700860 / DSM 12428 / JCM 9974 / NBRC 100139 / OT-3).